A 243-amino-acid polypeptide reads, in one-letter code: 1-(5-phosphoribosyl)-5-[(5-phosphoribosylamino)methylideneamino] imidazole-4-carboxamide isomerase (243 aa).

Residue Asp8 is the Proton acceptor of the active site. Asp129 acts as the Proton donor in catalysis.

This sequence belongs to the HisA/HisF family.

It localises to the cytoplasm. The catalysed reaction is 1-(5-phospho-beta-D-ribosyl)-5-[(5-phospho-beta-D-ribosylamino)methylideneamino]imidazole-4-carboxamide = 5-[(5-phospho-1-deoxy-D-ribulos-1-ylimino)methylamino]-1-(5-phospho-beta-D-ribosyl)imidazole-4-carboxamide. The protein operates within amino-acid biosynthesis; L-histidine biosynthesis; L-histidine from 5-phospho-alpha-D-ribose 1-diphosphate: step 4/9. This is 1-(5-phosphoribosyl)-5-[(5-phosphoribosylamino)methylideneamino] imidazole-4-carboxamide isomerase from Brucella abortus (strain 2308).